Consider the following 231-residue polypeptide: Vacuolar protein sorting-associated protein 24 (231 aa).

Positions 184 to 195 (KAADAATHREQS) are enriched in basic and acidic residues. Residues 184-214 (KAADAATHREQSLKQALPSLSNGIAKDSTEI) form a disordered region.

Belongs to the SNF7 family. In terms of assembly, component of the endosomal sorting required for transport complex III (ESCRT-III).

The protein resides in the endosome membrane. It is found in the endomembrane system. Its function is as follows. Class E VPS protein implicated in concentration and sorting of cargo proteins of the multivesicular body (MVB) for incorporation into intralumenal vesicles. The lumenal sequestrated membrane proteins will be targeted into the vacuole after fusion of the endosome with the vacuole. This Schizosaccharomyces pombe (strain 972 / ATCC 24843) (Fission yeast) protein is Vacuolar protein sorting-associated protein 24 (vps24).